A 283-amino-acid chain; its full sequence is 2-dehydro-3-deoxyphosphooctonate aldolase (283 aa).

The protein belongs to the KdsA family.

It is found in the cytoplasm. The catalysed reaction is D-arabinose 5-phosphate + phosphoenolpyruvate + H2O = 3-deoxy-alpha-D-manno-2-octulosonate-8-phosphate + phosphate. It participates in carbohydrate biosynthesis; 3-deoxy-D-manno-octulosonate biosynthesis; 3-deoxy-D-manno-octulosonate from D-ribulose 5-phosphate: step 2/3. Its pathway is bacterial outer membrane biogenesis; lipopolysaccharide biosynthesis. This chain is 2-dehydro-3-deoxyphosphooctonate aldolase, found in Shewanella frigidimarina (strain NCIMB 400).